Reading from the N-terminus, the 198-residue chain is Superoxide dismutase [Mn], mitochondrial (198 aa).

Histidine 26 lines the Mn(2+) pocket. Tyrosine 34 carries the 3'-nitrotyrosine modification. N6-acetyllysine; alternate is present on residues lysine 44 and lysine 51. Residues lysine 44 and lysine 51 each carry the N6-succinyllysine; alternate modification. Histidine 74 contributes to the Mn(2+) binding site. Lysine 90 carries the post-translational modification N6-acetyllysine. N6-acetyllysine; alternate is present on residues lysine 98 and lysine 106. Lysine 98 and lysine 106 each carry N6-succinyllysine; alternate. Mn(2+)-binding residues include aspartate 159 and histidine 163. Position 178 is an N6-acetyllysine (lysine 178).

Belongs to the iron/manganese superoxide dismutase family. In terms of assembly, homotetramer. The cofactor is Mn(2+). In terms of processing, nitrated under oxidative stress. Nitration coupled with oxidation inhibits the catalytic activity. Post-translationally, acetylation at Lys-98 decreases enzymatic activity. Deacetylated by SIRT3 upon exposure to ionizing radiations or after long fasting. Polyubiquitinated; leading to proteasomal degradation. Deubiquitinated by USP36 which increases protein stability.

It localises to the mitochondrion matrix. The catalysed reaction is 2 superoxide + 2 H(+) = H2O2 + O2. Destroys superoxide anion radicals which are normally produced within the cells and which are toxic to biological systems. The polypeptide is Superoxide dismutase [Mn], mitochondrial (SOD2) (Callithrix jacchus (White-tufted-ear marmoset)).